Reading from the N-terminus, the 357-residue chain is UPF0283 membrane protein HSM_0945 (357 aa).

Transmembrane regions (helical) follow at residues 67–87 (LMAT…QWLV), 96–116 (IAFV…GTII), and 213–233 (AVES…MFFI).

The protein belongs to the UPF0283 family.

It localises to the cell inner membrane. This chain is UPF0283 membrane protein HSM_0945, found in Histophilus somni (strain 2336) (Haemophilus somnus).